Here is a 319-residue protein sequence, read N- to C-terminus: GPI-specific phospholipase A2-like PGAP3 (319 aa).

An N-terminal signal peptide occupies residues 1-23; sequence MAGRTARLVLLAGAAALASGSQG. At 24–101 the chain is on the lumenal side; that stretch reads DREPVYRDCV…GKWPFSRFLC (78 aa). Asparagine 40 carries an N-linked (GlcNAc...) asparagine glycan. Residues 102–122 traverse the membrane as a helical segment; the sequence is FQEPASAVASFLNGLASLVML. Topologically, residues 123-135 are cytoplasmic; sequence CRYRTSVPASSPM. Residues 136 to 156 traverse the membrane as a helical segment; the sequence is YPTCVAFAWVSLNAWFWSTVF. The Lumenal portion of the chain corresponds to 157-169; sequence HTRDTDLTEKMDY. The chain crosses the membrane as a helical span at residues 170-190; that stretch reads FCASTVILHSIYLCCVRTVGL. At 191-200 the chain is on the cytoplasmic side; it reads QHPAMASAFR. A helical transmembrane segment spans residues 201–221; sequence ALLLLLLTAHVSYLSLIHFDY. Topologically, residues 222–224 are lumenal; it reads GYN. Residues 225-245 traverse the membrane as a helical segment; that stretch reads MAANVAIGLLNAAWWLAWCLW. The Cytoplasmic portion of the chain corresponds to 246-257; that stretch reads NQRLPHVHKCVA. The chain crosses the membrane as a helical span at residues 258–278; sequence VVLLLQGLSLLELLDFPPLFW. The Lumenal segment spans residues 279–281; the sequence is VLD. The helical transmembrane segment at 282–302 threads the bilayer; the sequence is AHAIWHISTIPVHVLFFSFLE. Residues 303 to 319 are Cytoplasmic-facing; it reads DDSLYLLKESEAKVKLD.

This sequence belongs to the PGAP3 family.

It localises to the golgi apparatus membrane. Involved in the fatty acid remodeling steps of GPI-anchor maturation where the unsaturated acyl chain at sn-2 of inositol phosphate is replaced by a saturated stearoyl chain. May catalyze the first step of the fatty acid remodeling, by removing the unsaturated acyl chain at sn-2 of inositol phosphate, generating a lyso-GPI intermediate. The fatty acid remodeling steps is critical for the integration of GPI-APs into lipid rafts. This Bos taurus (Bovine) protein is GPI-specific phospholipase A2-like PGAP3.